We begin with the raw amino-acid sequence, 62 residues long: Sperm protamine P1 (62 aa).

Residues 1 to 62 (MARSRRHSRS…RCSRRRRRRC (62 aa)) form a disordered region.

This sequence belongs to the protamine P1 family. As to expression, testis.

It is found in the nucleus. It localises to the chromosome. In terms of biological role, protamines substitute for histones in the chromatin of sperm during the haploid phase of spermatogenesis. They compact sperm DNA into a highly condensed, stable and inactive complex. This chain is Sperm protamine P1 (PRM1), found in Planigale ingrami (Long-tailed planigale).